Reading from the N-terminus, the 1194-residue chain is ATP-dependent RNA helicase DHX30 (1194 aa).

Residues 1-10 (MFSLDSFRKD) show a composition bias toward basic and acidic residues. A disordered region spans residues 1 to 27 (MFSLDSFRKDRAQHRQRQCKLPPPRLP). Serine 6 bears the Phosphoserine mark. Positions 53-121 (PKNLLNSVIG…QAAAAACQLF (69 aa)) constitute a DRBM domain. The tract at residues 150–199 (ADSWWRPEPTMPPTSWRQLNPESIRPGGPGGLSRSLGREEEEDEEEELEE) is disordered. Residues 188–199 (EEEEDEEEELEE) are compositionally biased toward acidic residues. Phosphoserine occurs at positions 226 and 380. In terms of domain architecture, Helicase ATP-binding spans 444-612 (LNAIEQHPVV…FGGCPVIKVP (169 aa)). 457–464 (GDTGCGKT) is an ATP binding site. A DEAH box motif is present at residues 559–562 (DEVH). The Helicase C-terminal domain maps to 654–827 (LVTDLVLHID…NLVLQAKIHM (174 aa)).

This sequence belongs to the DEAD box helicase family. DEAH subfamily. Identified in a complex with TFAM and SSBP1. Interacts (via N-terminus) with ZC3HAV1 (via N-terminal domain) in an RNA-independent manner. Found in a complex with GRSF1, DDX28, FASTKD2 and FASTKD5.

The protein resides in the cytoplasm. The protein localises to the mitochondrion. It is found in the mitochondrion matrix. It localises to the mitochondrion nucleoid. It carries out the reaction ATP + H2O = ADP + phosphate + H(+). In terms of biological role, RNA-dependent helicase. Plays an important role in the assembly of the mitochondrial large ribosomal subunit. Required for optimal function of the zinc-finger antiviral protein ZC3HAV1. Associates with mitochondrial DNA. Involved in nervous system development and differentiation through its involvement in the up-regulation of a number of genes which are required for neurogenesis, including GSC, NCAM1, neurogenin, and NEUROD. In Pongo abelii (Sumatran orangutan), this protein is ATP-dependent RNA helicase DHX30 (DHX30).